Here is a 278-residue protein sequence, read N- to C-terminus: Pantothenate synthetase (278 aa).

26–33 contributes to the ATP binding site; sequence MGNLHEGH. Catalysis depends on H33, which acts as the Proton donor. Q57 contributes to the (R)-pantoate binding site. Q57 is a binding site for beta-alanine. Residue 144–147 participates in ATP binding; sequence GKKD. Q150 lines the (R)-pantoate pocket. Residues G173 and 181–184 contribute to the ATP site; that span reads LSSR.

Belongs to the pantothenate synthetase family. Homodimer.

Its subcellular location is the cytoplasm. The enzyme catalyses (R)-pantoate + beta-alanine + ATP = (R)-pantothenate + AMP + diphosphate + H(+). The protein operates within cofactor biosynthesis; (R)-pantothenate biosynthesis; (R)-pantothenate from (R)-pantoate and beta-alanine: step 1/1. Catalyzes the condensation of pantoate with beta-alanine in an ATP-dependent reaction via a pantoyl-adenylate intermediate. This Neisseria meningitidis serogroup A / serotype 4A (strain DSM 15465 / Z2491) protein is Pantothenate synthetase.